Consider the following 612-residue polypeptide: UvrABC system protein C (612 aa).

Residues 20 to 98 (THSGVYRMLD…IKQHRPKYNI (79 aa)) form the GIY-YIG domain. Residues 208–243 (SSVLEEISAKMYQASEDMEYEKAQVYRDQLVILRKL) form the UVR domain.

Belongs to the UvrC family. In terms of assembly, interacts with UvrB in an incision complex.

It is found in the cytoplasm. Its function is as follows. The UvrABC repair system catalyzes the recognition and processing of DNA lesions. UvrC both incises the 5' and 3' sides of the lesion. The N-terminal half is responsible for the 3' incision and the C-terminal half is responsible for the 5' incision. The sequence is that of UvrABC system protein C from Francisella philomiragia subsp. philomiragia (strain ATCC 25017 / CCUG 19701 / FSC 153 / O#319-036).